The primary structure comprises 179 residues: ATP synthase subunit delta (179 aa).

This sequence belongs to the ATPase delta chain family. As to quaternary structure, F-type ATPases have 2 components, F(1) - the catalytic core - and F(0) - the membrane proton channel. F(1) has five subunits: alpha(3), beta(3), gamma(1), delta(1), epsilon(1). F(0) has three main subunits: a(1), b(2) and c(10-14). The alpha and beta chains form an alternating ring which encloses part of the gamma chain. F(1) is attached to F(0) by a central stalk formed by the gamma and epsilon chains, while a peripheral stalk is formed by the delta and b chains.

It is found in the cell inner membrane. Its function is as follows. F(1)F(0) ATP synthase produces ATP from ADP in the presence of a proton or sodium gradient. F-type ATPases consist of two structural domains, F(1) containing the extramembraneous catalytic core and F(0) containing the membrane proton channel, linked together by a central stalk and a peripheral stalk. During catalysis, ATP synthesis in the catalytic domain of F(1) is coupled via a rotary mechanism of the central stalk subunits to proton translocation. Functionally, this protein is part of the stalk that links CF(0) to CF(1). It either transmits conformational changes from CF(0) to CF(1) or is implicated in proton conduction. The protein is ATP synthase subunit delta of Burkholderia multivorans (strain ATCC 17616 / 249).